The chain runs to 267 residues: Glutamate racemase (267 aa).

Substrate is bound by residues 10-11 and 42-43; these read DS and YG. The active-site Proton donor/acceptor is cysteine 73. Position 74-75 (74-75) interacts with substrate; sequence NT. The active-site Proton donor/acceptor is cysteine 183. 184–185 provides a ligand contact to substrate; it reads TH.

This sequence belongs to the aspartate/glutamate racemases family.

It catalyses the reaction L-glutamate = D-glutamate. The protein operates within cell wall biogenesis; peptidoglycan biosynthesis. Functionally, provides the (R)-glutamate required for cell wall biosynthesis. This is Glutamate racemase from Lactobacillus helveticus (strain DPC 4571).